Here is a 1291-residue protein sequence, read N- to C-terminus: Tat-binding homolog 7 (1291 aa).

Residues 1-345 (MPRSDGFSPR…HNRGERERGR (345 aa)) are disordered. Positions 64 to 82 (RYYEEEYHEAISSEEDERR) are enriched in basic and acidic residues. Residues 88-99 (SSNSMTYRQQVM) show a composition bias toward polar residues. Positions 226 to 257 (EEEEEGAEEDEQSGEKDPEEEEDDSSNAESSE) are enriched in acidic residues. The span at 298 to 311 (NRHHRNRNGSRRRR) shows a compositional bias: basic residues. Residue 432–439 (GPPGTGKT) participates in ATP binding. Positions 914–1022 (ALQRQMRLFF…DAIDDLIECE (109 aa)) constitute a Bromo domain. The disordered stretch occupies residues 1110–1194 (KSEEGTSTST…MKDASKDSTP (85 aa)). A compositionally biased stretch (basic residues) spans 1128 to 1142 (NKKKLLKKKKGQKKS). Residues 1148–1164 (EEHDEDSTVEDAGEDTI) show a composition bias toward acidic residues. The span at 1168–1190 (LEIKKNQETPNSEHDIEMKDASK) shows a compositional bias: basic and acidic residues.

It belongs to the AAA ATPase family.

Functionally, thought to form a complex that enhances transcription from repetitive DNA sequences by modulating chromatin structure. The sequence is that of Tat-binding homolog 7 (lex-1) from Caenorhabditis elegans.